Consider the following 210-residue polypeptide: HTH-type transcriptional repressor FabR (210 aa).

The region spanning 10–70 (KTRRSLVEAA…TMVDESGLML (61 aa)) is the HTH tetR-type domain. The H-T-H motif DNA-binding region spans 33 to 52 (SLREVAREAGIAPTSFYRHF).

As to quaternary structure, homodimer.

It is found in the cytoplasm. Its function is as follows. Represses the transcription of fabB, involved in unsaturated fatty acid (UFA) biosynthesis. By controlling UFA production, FabR directly influences the physical properties of the membrane bilayer. This chain is HTH-type transcriptional repressor FabR, found in Klebsiella pneumoniae subsp. pneumoniae (strain ATCC 700721 / MGH 78578).